Reading from the N-terminus, the 112-residue chain is MGYRRLGLRSDHRRAMLRNMVTSLIKEERITTTETRAKEVRSIAEKMVTLAKRGDLAARRQVSEYLFDEEAAKKLFNTVAARYKDRPGGYTRIVKVGFRRGDAAPMVILELV.

The protein belongs to the bacterial ribosomal protein bL17 family. In terms of assembly, part of the 50S ribosomal subunit. Contacts protein L32.

This is Large ribosomal subunit protein bL17 from Desulforudis audaxviator (strain MP104C).